The sequence spans 274 residues: NH(3)-dependent NAD(+) synthetase (274 aa).

Position 46–53 (46–53 (GISGGQDS)) interacts with ATP. Aspartate 52 contributes to the Mg(2+) binding site. Arginine 140 serves as a coordination point for deamido-NAD(+). Threonine 160 serves as a coordination point for ATP. Mg(2+) is bound at residue glutamate 165. Residues lysine 173 and aspartate 180 each coordinate deamido-NAD(+). ATP is bound by residues lysine 189 and threonine 211. 260–261 (HK) serves as a coordination point for deamido-NAD(+).

The protein belongs to the NAD synthetase family. In terms of assembly, homodimer.

It catalyses the reaction deamido-NAD(+) + NH4(+) + ATP = AMP + diphosphate + NAD(+) + H(+). The protein operates within cofactor biosynthesis; NAD(+) biosynthesis; NAD(+) from deamido-NAD(+) (ammonia route): step 1/1. In terms of biological role, catalyzes the ATP-dependent amidation of deamido-NAD to form NAD. Uses ammonia as a nitrogen source. In Streptococcus equi subsp. zooepidemicus (strain MGCS10565), this protein is NH(3)-dependent NAD(+) synthetase.